We begin with the raw amino-acid sequence, 698 residues long: MTHTISGQYGRDTIVLETGSWAKQAHGAVVYKSGNLVLLATVCAADEAKEGQDFFPLTCEYTEKLYSVGRFPGGYFKREAKPPEHEILISRIIDRPIRPLFPEGYFCEVQLQVQVLSADGDVSVAGHALNAASAALAVSDIPFNGPIAGARIGRVNGELILNPTTKEILNSDLDLVVAGTKTHIVMIEGEAKELSNEEMIAALRFAQKHIAEFVTLQEEYAKKIGVVKREVKLKVRDEELLSKVKEYAFAKLTTANQTPDKTARNKEISNVNKEVVEFFKDTIEDSDKIKDIKAYLHELEYEIVREQVLTKGTRFDGRKLDEIRSISVEINPLPGPHGSAVFTRGQTQSLGVVTLGTGSDNQRYETLEGQKEKSFMLHYNFPAFSVGEVRRSSGPGRREIGHGNLAERALKLVLPKPDEFPYVIRVVSEILESNGSSSMASVCSGSLALMAAGVPIQGSVSGIAMGLFSDSSGKYAVLSDIAGLEDHFGDMDCKIAGTRKGITAFQMDLKVTGVSFDVLESVFEQAQRGRFHILDIMEKHISKASSTLAGTAPRIIVRNIPKDRIGELIGPGGKNVRGISELTGAELYIEDDGKVTISGSNQESAEKAAKMVDGFFAEVEVGKIYEGKVKRIADFGAFVEILPGKEGLCHISKIDFKRVNSVKDIVKEGDIIRVKVLNVDKTGKIDLSRKDALEEEQV.

Mg(2+) is bound by residues D486 and D492. The region spanning 553–612 (PRIIVRNIPKDRIGELIGPGGKNVRGISELTGAELYIEDDGKVTISGSNQESAEKAAKMV) is the KH domain. One can recognise an S1 motif domain in the interval 622–690 (GKIYEGKVKR…KTGKIDLSRK (69 aa)).

This sequence belongs to the polyribonucleotide nucleotidyltransferase family. It depends on Mg(2+) as a cofactor.

It is found in the cytoplasm. The enzyme catalyses RNA(n+1) + phosphate = RNA(n) + a ribonucleoside 5'-diphosphate. Involved in mRNA degradation. Catalyzes the phosphorolysis of single-stranded polyribonucleotides processively in the 3'- to 5'-direction. This Leptospira interrogans serogroup Icterohaemorrhagiae serovar copenhageni (strain Fiocruz L1-130) protein is Polyribonucleotide nucleotidyltransferase.